The following is a 263-amino-acid chain: Small ribosomal subunit protein eS4, Y isoform 1 (263 aa).

Positions 42 to 104 (LPLIVFLRNR…TGEHFRLVYD (63 aa)) constitute an S4 RNA-binding domain.

This sequence belongs to the eukaryotic ribosomal protein eS4 family.

The sequence is that of Small ribosomal subunit protein eS4, Y isoform 1 (RPS4Y1) from Homo sapiens (Human).